The following is a 456-amino-acid chain: Gamma-glutamyl phosphate reductase (456 aa).

Belongs to the gamma-glutamyl phosphate reductase family.

It localises to the cytoplasm. The catalysed reaction is L-glutamate 5-semialdehyde + phosphate + NADP(+) = L-glutamyl 5-phosphate + NADPH + H(+). The protein operates within amino-acid biosynthesis; L-proline biosynthesis; L-glutamate 5-semialdehyde from L-glutamate: step 2/2. In terms of biological role, catalyzes the NADPH-dependent reduction of L-glutamate 5-phosphate into L-glutamate 5-semialdehyde and phosphate. The product spontaneously undergoes cyclization to form 1-pyrroline-5-carboxylate. The sequence is that of Gamma-glutamyl phosphate reductase from Haloquadratum walsbyi (strain DSM 16790 / HBSQ001).